A 623-amino-acid polypeptide reads, in one-letter code: MQDTNPSQPDSPITGYACIQDYLRNLSGAPGVYRMLDAQARVLYVGKARNLKARVSNYARPGHSPRIERMIRETASMMFLTTRTETEALLLEQNLIKQLKPKYNVLLRDDKSFPNILVAKDHSFAQIKKHRGAKKEKGTYFGPFASAGAVNRTLNQLQKAFLLRNCTDAVFESRTRPCLLYQIKRCSAPCVGLISDQDYAAAVKDAERFLSGRSTRVQEELAEQMMAASEAMEFERAAALRDRIRALTTVQGTQGINPRGVAEADVVALHLENGQACVQVFFIRANQNWGNRDFYPRVGEDVSAAEVMEAFLGQFYDNKEPPRQLILSDAIENADLMTEALSEKAGRKVELLVPQRGEKAELVSGALRNARESLARRMSESATQTKLLGGLAEAFDLDGPPQRIEVYDNSHIQGTNAVGGMIVAGPEGFLKNQYRKFNIRGDDLTPGDDFGMMKEVLTRRFTRLLKEDPDRDKGLWPDLLLIDGGAGQVSAVHEIMMAHGVQDIPMVGVAKGIDRDHGKEEFHRTGQRPFALKRNDPVLYFIQRLRDEAHRFAIGTHRAKRAKAVSATPLDDIPGVGAARKRALLAHFGSAKAVSRADLADLTAVEGVSAGLAQKIYDFFHES.

A GIY-YIG domain is found at 28-105; it reads GAPGVYRMLD…IKQLKPKYNV (78 aa). The 36-residue stretch at 215-250 folds into the UVR domain; sequence TRVQEELAEQMMAASEAMEFERAAALRDRIRALTTV.

The protein belongs to the UvrC family. As to quaternary structure, interacts with UvrB in an incision complex.

It is found in the cytoplasm. Functionally, the UvrABC repair system catalyzes the recognition and processing of DNA lesions. UvrC both incises the 5' and 3' sides of the lesion. The N-terminal half is responsible for the 3' incision and the C-terminal half is responsible for the 5' incision. The polypeptide is UvrABC system protein C (Ruegeria pomeroyi (strain ATCC 700808 / DSM 15171 / DSS-3) (Silicibacter pomeroyi)).